The following is a 78-amino-acid chain: UPF0291 protein Exig_1097 (78 aa).

A disordered region spans residues 57 to 78; it reads EEGTDVTPEKLKQAQEEERNKQ. Residues 63–78 are compositionally biased toward basic and acidic residues; the sequence is TPEKLKQAQEEERNKQ.

It belongs to the UPF0291 family.

Its subcellular location is the cytoplasm. This is UPF0291 protein Exig_1097 from Exiguobacterium sibiricum (strain DSM 17290 / CCUG 55495 / CIP 109462 / JCM 13490 / 255-15).